The primary structure comprises 283 residues: tRNA dimethylallyltransferase (283 aa).

The interaction with substrate tRNA stretch occupies residues 5–8 (DSML).

It belongs to the IPP transferase family. Monomer. It depends on Mg(2+) as a cofactor.

The catalysed reaction is adenosine(37) in tRNA + dimethylallyl diphosphate = N(6)-dimethylallyladenosine(37) in tRNA + diphosphate. Its function is as follows. Catalyzes the transfer of a dimethylallyl group onto the adenine at position 37 in tRNAs that read codons beginning with uridine, leading to the formation of N6-(dimethylallyl)adenosine (i(6)A). The chain is tRNA dimethylallyltransferase from Desulforamulus reducens (strain ATCC BAA-1160 / DSM 100696 / MI-1) (Desulfotomaculum reducens).